We begin with the raw amino-acid sequence, 185 residues long: Nodulin-20 (185 aa).

Positions 1–17 (MRVVLITLFLFIGAAVA) are cleaved as a signal peptide.

Belongs to the nodulin 20 family.

The protein resides in the symbiosome. It localises to the peribacteroid membrane. It is found in the peribacteroid space. This Glycine max (Soybean) protein is Nodulin-20.